The chain runs to 2211 residues: Nonribosomal peptide synthetase 13 (2211 aa).

An adenylation 1 region spans residues 76-475; it reads TYAELDSLSD…IEHHLQLTLP (400 aa). Residues 594 to 671 enclose the Carrier 1 domain; that stretch reads PPSTPKEATI…EQSKRAGLIQ (78 aa). At Ser631 the chain carries O-(pantetheine 4'-phosphoryl)serine. Residues 710–975 are condensation 1; it reads EDIYPCTALQ…IATVPTRIRV (266 aa). The tract at residues 1169 to 1563 is adenylation 2; it reads TYRELWAHSS…LGAVEASVMR (395 aa). The Carrier 2 domain maps to 1677-1756; it reads PMSDDNERRL…RSRHLITEQA (80 aa). An O-(pantetheine 4'-phosphoryl)serine modification is found at Ser1714. Residues 1814–2069 form a condensation 2 region; it reads HFQFDLSGAV…CTNYIPYRLS (256 aa).

The protein belongs to the NRP synthetase family.

It carries out the reaction L-proline + L-tryptophan + 2 ATP = brevianamide F + 2 AMP + 2 diphosphate + 2 H(+). The protein operates within mycotoxin biosynthesis. Nonribosomal peptide synthetase; part of the gene cluster that mediates the biosynthesis of fumitremorgins, indole alkaloids that carry not only intriguing chemical structures, but also interesting biological and pharmacological activities. The biosynthesis of fumitremorgin-type alkaloids begins by condensation of the two amino acids L-tryptophan and L-proline to brevianamide F, catalyzed by the non-ribosomal peptide synthetase ftmA. Brevianamide F is then prenylated by the prenyltransferase ftmPT1/ftmB in the presence of dimethylallyl diphosphate, resulting in the formation of tryprostatin B. The three cytochrome P450 monooxygenases, ftmP450-1/ftmC, ftmP450-2/ftmE and ftmP450-3/FtmG, are responsible for the conversion of tryprostatin B to 6-hydroxytryprostatin B, tryprostatin A to fumitremorgin C and fumitremorgin C to 12,13-dihydroxyfumitremorgin C, respectively. The putative methyltransferase ftmMT/ftmD is expected for the conversion of 6-hydroxytryprostatin B to tryprostatin A. FtmPT2/FtmH catalyzes the prenylation of 12,13-dihydroxyfumitre-morgin C in the presence of dimethylallyl diphosphate, resulting in the formation of fumitremorgin B. Fumitremorgin B is further converted to verruculogen by ftmOx1/ftmF via the insertion of an endoperoxide bond between the two prenyl moieties. In some fungal species, verruculogen is further converted to fumitremorgin A, but the enzymes involved in this step have not been identified yet. This is Nonribosomal peptide synthetase 13 from Aspergillus fumigatus (strain ATCC MYA-4609 / CBS 101355 / FGSC A1100 / Af293) (Neosartorya fumigata).